We begin with the raw amino-acid sequence, 445 residues long: Vacuolar fusion protein CCZ1 homolog (445 aa).

The protein belongs to the CCZ1 family.

The polypeptide is Vacuolar fusion protein CCZ1 homolog (Dictyostelium discoideum (Social amoeba)).